A 137-amino-acid chain; its full sequence is Large ribosomal subunit protein uL16 (137 aa).

It belongs to the universal ribosomal protein uL16 family. In terms of assembly, part of the 50S ribosomal subunit.

Its function is as follows. Binds 23S rRNA and is also seen to make contacts with the A and possibly P site tRNAs. In Alkalilimnicola ehrlichii (strain ATCC BAA-1101 / DSM 17681 / MLHE-1), this protein is Large ribosomal subunit protein uL16.